Reading from the N-terminus, the 130-residue chain is Mitochondrial import protein 1 (130 aa).

The disordered stretch occupies residues 1–41; it reads MSAEEISNPLAESGVTISSDSEQYSAPESASPQSPSSSSPA. Residues 15–24 show a composition bias toward polar residues; the sequence is VTISSDSEQY. Positions 25 to 41 are enriched in low complexity; the sequence is SAPESASPQSPSSSSPA.

It belongs to the MIM1 family.

The protein resides in the mitochondrion outer membrane. Functionally, required for the assembly of the TOM (translocase of outer membrane) receptor complex, which is responsible for the recognition and translocation of cytosolically synthesized mitochondrial preproteins. The polypeptide is Mitochondrial import protein 1 (Neurospora crassa (strain ATCC 24698 / 74-OR23-1A / CBS 708.71 / DSM 1257 / FGSC 987)).